Here is a 238-residue protein sequence, read N- to C-terminus: Hydroxyacylglutathione hydrolase (238 aa).

His-52, His-54, Asp-56, His-57, His-108, Asp-125, and His-163 together coordinate Zn(2+).

It belongs to the metallo-beta-lactamase superfamily. Glyoxalase II family. In terms of assembly, monomer. The cofactor is Zn(2+).

The catalysed reaction is an S-(2-hydroxyacyl)glutathione + H2O = a 2-hydroxy carboxylate + glutathione + H(+). It functions in the pathway secondary metabolite metabolism; methylglyoxal degradation; (R)-lactate from methylglyoxal: step 2/2. Functionally, thiolesterase that catalyzes the hydrolysis of S-D-lactoyl-glutathione to form glutathione and D-lactic acid. The sequence is that of Hydroxyacylglutathione hydrolase from Haemophilus influenzae (strain ATCC 51907 / DSM 11121 / KW20 / Rd).